We begin with the raw amino-acid sequence, 334 residues long: Heat-inducible transcription repressor HrcA (334 aa).

This sequence belongs to the HrcA family.

Functionally, negative regulator of class I heat shock genes (grpE-dnaK-dnaJ and groELS operons). Prevents heat-shock induction of these operons. The polypeptide is Heat-inducible transcription repressor HrcA (Albidiferax ferrireducens (strain ATCC BAA-621 / DSM 15236 / T118) (Rhodoferax ferrireducens)).